Here is a 125-residue protein sequence, read N- to C-terminus: Large ribosomal subunit protein bL12 (125 aa).

Belongs to the bacterial ribosomal protein bL12 family. In terms of assembly, homodimer. Part of the ribosomal stalk of the 50S ribosomal subunit. Forms a multimeric L10(L12)X complex, where L10 forms an elongated spine to which 2 to 4 L12 dimers bind in a sequential fashion. Binds GTP-bound translation factors.

Its function is as follows. Forms part of the ribosomal stalk which helps the ribosome interact with GTP-bound translation factors. Is thus essential for accurate translation. This chain is Large ribosomal subunit protein bL12, found in Sphingopyxis alaskensis (strain DSM 13593 / LMG 18877 / RB2256) (Sphingomonas alaskensis).